The sequence spans 291 residues: Transmembrane protein 41B (291 aa).

Residues 1-11 (MAKGRVAERSQ) are compositionally biased toward basic and acidic residues. Residues 1–38 (MAKGRVAERSQTEMLHSTPAGDRAVGTQGSAAPGNKDH) form a disordered region. At Thr-18 the chain carries Phosphothreonine. Transmembrane regions (helical) follow at residues 52 to 72 (TSLLILVSIFSCAAFVMFLVY), 109 to 129 (FYVQVLVAYFATYIFLQTFAI), 147 to 169 (LALFLVCLCSGLGASFCYMLSYL), 197 to 217 (LINYIIFLRITPFLPNWFINI), 225 to 245 (PLKVFFIGTFLGVAPPSFVAI), and 262 to 282 (SWNSVFILMILALLSILPAIF). Residues 140–251 (GFLYPFPLAL…FVAIKAGTTL (112 aa)) form a VTT domain; required for its function in autophagy region.

This sequence belongs to the TMEM41 family. Interacts with VMP1. Interacts with COPA, COPB1, VDAC1 and ERLIN2. Interacts with ATG2A. Interacts with SURF4.

The protein localises to the endoplasmic reticulum membrane. The protein resides in the endomembrane system. The catalysed reaction is a 1,2-diacyl-sn-glycero-3-phospho-L-serine(in) = a 1,2-diacyl-sn-glycero-3-phospho-L-serine(out). The enzyme catalyses cholesterol(in) = cholesterol(out). It catalyses the reaction a 1,2-diacyl-sn-glycero-3-phosphocholine(in) = a 1,2-diacyl-sn-glycero-3-phosphocholine(out). It carries out the reaction a 1,2-diacyl-sn-glycero-3-phosphoethanolamine(in) = a 1,2-diacyl-sn-glycero-3-phosphoethanolamine(out). Phospholipid scramblase involved in lipid homeostasis and membrane dynamics processes. Has phospholipid scramblase activity toward cholesterol and phosphatidylserine, as well as phosphatidylethanolamine and phosphatidylcholine. Required for autophagosome formation: participates in early stages of autophagosome biogenesis at the endoplasmic reticulum (ER) membrane by reequilibrating the leaflets of the ER as lipids are extracted by ATG2 (ATG2A or ATG2B) to mediate autophagosome assembly. In addition to autophagy, involved in other processes in which phospholipid scramblase activity is required. Required for normal motor neuron development. This chain is Transmembrane protein 41B, found in Rattus norvegicus (Rat).